Consider the following 560-residue polypeptide: Dihydroxy-acid dehydratase (560 aa).

C52 contacts [2Fe-2S] cluster. Position 84 (D84) interacts with Mg(2+). C125 is a binding site for [2Fe-2S] cluster. D126 and K127 together coordinate Mg(2+). Position 127 is an N6-carboxylysine (K127). C197 serves as a coordination point for [2Fe-2S] cluster. Mg(2+) is bound at residue E448. Residue S474 is the Proton acceptor of the active site.

Belongs to the IlvD/Edd family. Homodimer. [2Fe-2S] cluster serves as cofactor. Requires Mg(2+) as cofactor.

The enzyme catalyses (2R)-2,3-dihydroxy-3-methylbutanoate = 3-methyl-2-oxobutanoate + H2O. It carries out the reaction (2R,3R)-2,3-dihydroxy-3-methylpentanoate = (S)-3-methyl-2-oxopentanoate + H2O. It participates in amino-acid biosynthesis; L-isoleucine biosynthesis; L-isoleucine from 2-oxobutanoate: step 3/4. The protein operates within amino-acid biosynthesis; L-valine biosynthesis; L-valine from pyruvate: step 3/4. In terms of biological role, functions in the biosynthesis of branched-chain amino acids. Catalyzes the dehydration of (2R,3R)-2,3-dihydroxy-3-methylpentanoate (2,3-dihydroxy-3-methylvalerate) into 2-oxo-3-methylpentanoate (2-oxo-3-methylvalerate) and of (2R)-2,3-dihydroxy-3-methylbutanoate (2,3-dihydroxyisovalerate) into 2-oxo-3-methylbutanoate (2-oxoisovalerate), the penultimate precursor to L-isoleucine and L-valine, respectively. The chain is Dihydroxy-acid dehydratase from Leptospira borgpetersenii serovar Hardjo-bovis (strain JB197).